The primary structure comprises 216 residues: Transmembrane protein 139 (216 aa).

Residues 1-25 form the signal peptide; it reads MVPMHLLGRLEKPLLLLCCASFLLG. The Extracellular segment spans residues 26–34; the sequence is LALLGIKTD. The chain crosses the membrane as a helical span at residues 35–55; the sequence is ITPVAYFFLTLGGFFLFAYLL. The Cytoplasmic portion of the chain corresponds to 56–216; sequence VRFLEWGLRS…VFYEDNWAPP (161 aa). The disordered stretch occupies residues 104–163; sequence RPQELDQPPPYSTVVIPPAPEEEQPSHPEGSRRAKLEQRRMASEGSMAQEGSPGRAPINL. The span at 127–145 shows a compositional bias: basic and acidic residues; it reads QPSHPEGSRRAKLEQRRMA. Phosphoserine is present on residues Ser146 and Ser155.

As to quaternary structure, interacts with isoform 2 of SLC4A1.

The protein localises to the membrane. May be involved in cellular trafficking of proteins such as SLC4A1. This chain is Transmembrane protein 139 (TMEM139), found in Homo sapiens (Human).